A 289-amino-acid chain; its full sequence is Rhomboid-type serine protease 2 (289 aa).

A run of 6 helical transmembrane segments spans residues 26-46 (VVIIAIVGFWLAGLQSIVDIQ), 67-87 (FPFIHLNIFHAVMNILALTPL), 100-120 (CLALFFGPLTTIPAFLYIGLE), 122-142 (FVFGNNVAVMGASMWVFLLLG), 157-179 (IGTYSIPTWTTPIGVLFAMAVLV), and 184-203 (FWGHAAGLVIGYGGMFSSTL). Ser-134 (nucleophile) is an active-site residue. His-187 is a catalytic residue.

It belongs to the peptidase S54 family.

It localises to the golgi apparatus membrane. The protein localises to the golgi apparatus. Its subcellular location is the cis-Golgi network membrane. It catalyses the reaction Cleaves type-1 transmembrane domains using a catalytic dyad composed of serine and histidine that are contributed by different transmembrane domains.. Functionally, probable rhomboid-type serine protease that catalyzes intramembrane proteolysis. The chain is Rhomboid-type serine protease 2 (RBD2) from Podospora anserina (Pleurage anserina).